Consider the following 1392-residue polypeptide: DNA-directed RNA polymerase subunit beta (1392 aa).

Belongs to the RNA polymerase beta chain family. As to quaternary structure, the RNAP catalytic core consists of 2 alpha, 1 beta, 1 beta' and 1 omega subunit. When a sigma factor is associated with the core the holoenzyme is formed, which can initiate transcription.

The catalysed reaction is RNA(n) + a ribonucleoside 5'-triphosphate = RNA(n+1) + diphosphate. Its function is as follows. DNA-dependent RNA polymerase catalyzes the transcription of DNA into RNA using the four ribonucleoside triphosphates as substrates. The sequence is that of DNA-directed RNA polymerase subunit beta from Neisseria gonorrhoeae (strain ATCC 700825 / FA 1090).